A 447-amino-acid chain; its full sequence is Tubulin beta-6 chain (447 aa).

Positions 11, 69, 138, 142, 143, 144, 204, and 226 each coordinate GTP. Position 69 (glutamate 69) interacts with Mg(2+). Residues glutamine 426 to methionine 447 are disordered. Positions threonine 429 to methionine 447 are enriched in acidic residues.

The protein belongs to the tubulin family. In terms of assembly, dimer of alpha and beta chains. A typical microtubule is a hollow water-filled tube with an outer diameter of 25 nm and an inner diameter of 15 nM. Alpha-beta heterodimers associate head-to-tail to form protofilaments running lengthwise along the microtubule wall with the beta-tubulin subunit facing the microtubule plus end conferring a structural polarity. Microtubules usually have 13 protofilaments but different protofilament numbers can be found in some organisms and specialized cells. It depends on Mg(2+) as a cofactor.

Its subcellular location is the cytoplasm. The protein localises to the cytoskeleton. Functionally, tubulin is the major constituent of microtubules, a cylinder consisting of laterally associated linear protofilaments composed of alpha- and beta-tubulin heterodimers. Microtubules grow by the addition of GTP-tubulin dimers to the microtubule end, where a stabilizing cap forms. Below the cap, tubulin dimers are in GDP-bound state, owing to GTPase activity of alpha-tubulin. The protein is Tubulin beta-6 chain (TUBB6) of Ectocarpus variabilis (Brown alga).